A 147-amino-acid chain; its full sequence is Large ribosomal subunit protein uL15 (147 aa).

A compositionally biased stretch (basic and acidic residues) spans 1-11 (MKLHDLRPAKD). Positions 1-57 (MKLHDLRPAKDAKKKRKRVGRGTGSGRGFTSGRGSKGQNARSGGGVRPTFEGGQTPL) are disordered. The span at 21 to 35 (RGTGSGRGFTSGRGS) shows a compositional bias: gly residues.

This sequence belongs to the universal ribosomal protein uL15 family. Part of the 50S ribosomal subunit.

Functionally, binds to the 23S rRNA. This Halothermothrix orenii (strain H 168 / OCM 544 / DSM 9562) protein is Large ribosomal subunit protein uL15.